The primary structure comprises 88 residues: Putative septation protein SpoVG (88 aa).

This sequence belongs to the SpoVG family.

Its function is as follows. Could be involved in septation. This Caldicellulosiruptor bescii (strain ATCC BAA-1888 / DSM 6725 / KCTC 15123 / Z-1320) (Anaerocellum thermophilum) protein is Putative septation protein SpoVG.